A 482-amino-acid chain; its full sequence is U2 small nuclear ribonucleoprotein auxiliary factor 35 kDa subunit-related protein 2 (482 aa).

A disordered region spans residues 1-59 (MAAPEKMTFPEKPSHKKYRAALKKEKRKKRRQELARLRDSGLSQKEEEEDTFIEEQQLE). The span at 14–31 (SHKKYRAALKKEKRKKRR) shows a compositional bias: basic residues. Residue K45 forms a Glycyl lysine isopeptide (Lys-Gly) (interchain with G-Cter in SUMO2) linkage. The segment covering 46–58 (EEEEDTFIEEQQL) has biased composition (acidic residues). Residue K62 forms a Glycyl lysine isopeptide (Lys-Gly) (interchain with G-Cter in SUMO2) linkage. Residues 115 to 135 (QRKEREEEEQKRQEKKEKEEA) form a disordered region. The C3H1-type 1 zinc-finger motif lies at 166–194 (EKDRANCPFYSKTGACRFGDRCSRKHNFP). Residues 198-304 (PTLLIKSMFT…RQLQCEFCPV (107 aa)) enclose the RRM domain. The C3H1-type 2 zinc-finger motif lies at 306 to 333 (RWKMAICGLFEIQQCPRGKHCNFLHVFR). Position 349 is a phosphoserine (S349). A disordered region spans residues 351–482 (DRTGSSFGKN…DRTVQSPKSK (132 aa)). Composition is skewed to basic and acidic residues over residues 360–375 (NSER…DYYS) and 383–398 (PSPD…SERK). At S384 the chain carries Phosphoserine. Residues 399-412 (SSRHRGKKSHKRTS) show a composition bias toward basic residues. A compositionally biased stretch (basic and acidic residues) spans 413–435 (KSRERHNSRSRGRNRDRSRDRSR). Over residues 436-454 (GRGSRSRSRSRSRRSRRSR) the composition is skewed to basic residues.

In terms of assembly, component of the U11/U12 snRNPs that are part of the U12-type spliceosome. Interacts (via RS domain) with SRSF1 and SRSF2. Interacts with U2AF2/U2AF65. Phosphorylated in the RS domain by SRPK1. Widely expressed.

Its subcellular location is the nucleus. Functionally, pre-mRNA-binding protein required for splicing of both U2- and U12-type introns. Selectively interacts with the 3'-splice site of U2- and U12-type pre-mRNAs and promotes different steps in U2 and U12 intron splicing. Recruited to U12 pre-mRNAs in an ATP-dependent manner and is required for assembly of the pre-spliceosome, a precursor to other spliceosomal complexes. For U2-type introns, it is selectively and specifically required for the second step of splicing. This Homo sapiens (Human) protein is U2 small nuclear ribonucleoprotein auxiliary factor 35 kDa subunit-related protein 2 (ZRSR2).